A 396-amino-acid polypeptide reads, in one-letter code: S-adenosylmethionine synthase 3 (396 aa).

Position 12 (Glu-12) interacts with Mg(2+). ATP is bound at residue His-18. K(+) is bound at residue Glu-46. L-methionine is bound by residues Glu-59 and Gln-102. Residues 170–172 (DGK), 238–241 (SGRF), Asp-249, 255–256 (RK), Ala-272, Lys-276, and Lys-280 each bind ATP. Asp-249 serves as a coordination point for L-methionine. Lys-280 serves as a coordination point for L-methionine.

Belongs to the AdoMet synthase family. Homotetramer. Requires Mn(2+) as cofactor. Mg(2+) is required as a cofactor. It depends on Co(2+) as a cofactor. K(+) serves as cofactor.

The protein localises to the cytoplasm. It carries out the reaction L-methionine + ATP + H2O = S-adenosyl-L-methionine + phosphate + diphosphate. It functions in the pathway amino-acid biosynthesis; S-adenosyl-L-methionine biosynthesis; S-adenosyl-L-methionine from L-methionine: step 1/1. Functionally, catalyzes the formation of S-adenosylmethionine from methionine and ATP. The reaction comprises two steps that are both catalyzed by the same enzyme: formation of S-adenosylmethionine (AdoMet) and triphosphate, and subsequent hydrolysis of the triphosphate. The polypeptide is S-adenosylmethionine synthase 3 (METK3) (Oryza sativa subsp. japonica (Rice)).